Here is a 145-residue protein sequence, read N- to C-terminus: MSTVYHRPADPSGDDSYVRPLFADRCQAGFPSPATDYAEQELDLNSYCISRPAATFFLRASGESMNQAGVQNGDLLVVDRAEKPQHGDIVIAEIDGEFTVKRLLLRPRPALEPVSDSPEFRTLYPENICIFGVVTHVIHRTRELR.

Residues S64 and K101 each act as for autocatalytic cleavage activity in the active site.

The protein belongs to the peptidase S24 family.

Involved in UV protection and mutation. This chain is Protein ImpA, found in Escherichia coli.